An 82-amino-acid polypeptide reads, in one-letter code: uncharacterized protein (82 aa).

Its function is as follows. This protein may be involved in virus assembly. This is an uncharacterized protein from Sulfolobus spindle-shape virus 1 (SSV1).